We begin with the raw amino-acid sequence, 263 residues long: Transmembrane protein 176B (263 aa).

The next 4 helical transmembrane spans lie at Leu61–Phe81, Ala89–Val109, Val121–Val141, and Leu197–Val217. Phosphoserine occurs at positions 231, 240, and 253. The interval Glu239–Leu263 is disordered.

Belongs to the TMEM176 family. As to expression, ubiquitously expressed with higher expression in lung, liver, kidney and colon. Expressed in cerebellar granule cells.

The protein resides in the nucleus membrane. May play a role in the process of maturation of dendritic cells. Required for the development of cerebellar granule cells. This chain is Transmembrane protein 176B (Tmem176b), found in Mus musculus (Mouse).